We begin with the raw amino-acid sequence, 243 residues long: UPF0502 protein RALTA_B0914 (243 aa).

Positions 1 to 10 (MPSTPESDPT) are enriched in polar residues. Positions 1–23 (MPSTPESDPTQPGDRPARPALRP) are disordered.

This sequence belongs to the UPF0502 family.

In Cupriavidus taiwanensis (strain DSM 17343 / BCRC 17206 / CCUG 44338 / CIP 107171 / LMG 19424 / R1) (Ralstonia taiwanensis (strain LMG 19424)), this protein is UPF0502 protein RALTA_B0914.